A 292-amino-acid chain; its full sequence is ATP synthase gamma chain (292 aa).

This sequence belongs to the ATPase gamma chain family. F-type ATPases have 2 components, CF(1) - the catalytic core - and CF(0) - the membrane proton channel. CF(1) has five subunits: alpha(3), beta(3), gamma(1), delta(1), epsilon(1). CF(0) has three main subunits: a, b and c.

It localises to the cell membrane. Produces ATP from ADP in the presence of a proton gradient across the membrane. The gamma chain is believed to be important in regulating ATPase activity and the flow of protons through the CF(0) complex. This Caldicellulosiruptor saccharolyticus (strain ATCC 43494 / DSM 8903 / Tp8T 6331) protein is ATP synthase gamma chain.